We begin with the raw amino-acid sequence, 345 residues long: MKEFDLESYDYYLPKELIASYPVLPKEKAKLLVYERRSQKITHTTFEHVLDFFPKNALIVLNDTKVIKARLFGSKHAFLPSKTTEVFFHRFFKNNTALTQIKGKIKVGDKIFFDANYHAEVLELLHNGQRLIAFYDNKTPLNQENILKLLEQYGHMPLPPYIKRADESLDAHEYQSVFAKHMGAVAAPTASLHFSQNTLEKLLKDFKHAFLTLHVGAGTFLSVETKDIREHQIHTEVLRIPKKSQEILQKSQEILCVGTTALRSVEYFKRLENPNQEAFECDIFLHFANPILHVNYLLTNFHLPKSSLLMLVSTMIGLEKTKEIYKTAIEKKYRFYSYGDGMLIL.

The protein belongs to the QueA family. Monomer.

It localises to the cytoplasm. The catalysed reaction is 7-aminomethyl-7-carbaguanosine(34) in tRNA + S-adenosyl-L-methionine = epoxyqueuosine(34) in tRNA + adenine + L-methionine + 2 H(+). The protein operates within tRNA modification; tRNA-queuosine biosynthesis. Transfers and isomerizes the ribose moiety from AdoMet to the 7-aminomethyl group of 7-deazaguanine (preQ1-tRNA) to give epoxyqueuosine (oQ-tRNA). The protein is S-adenosylmethionine:tRNA ribosyltransferase-isomerase of Helicobacter pylori (strain ATCC 700392 / 26695) (Campylobacter pylori).